A 714-amino-acid polypeptide reads, in one-letter code: MEMTSAFTLNVRLDNIAVITIDVPGEKMNTLKAEFASQVRAIIKQLRENKELRGVVFVSAKPDNFIAGADINMIGNCKTAQEAEALARQGQQLMAEIHALPIPVIAAIHGACLGGGLELALACHGRVCTDDPKTVLGLPEVQLGLLPGSGGTQRLPRLIGVSTALEMILTGKQLRAKQALKLGLVDDVVPHSILLEVAVELAKKDRPSSRPLPVRERILAGPLGRALLFKMVGKKTEHKTQGNYPATERILEVVETGLAQGTSSGYDAEARAFGELAMTPQSQALRSIFFASTDVKKDPGSDAPPAPLNSVGILGGGLMGGGIAYVTACKVGLPVRIKDINPQGINHALKYSWDQLEGKVRRRHLKASERDKQLALISGTTDYRGFAHRDLIIEAVFENLELKQQMVAEVEQNSAAHTIFASNTSSLPIGDIAAHATRPEQVIGLHFFSPVEKMPLVEIIPHAGTSAQTIATTVKLAKKQGKTPIVVRDKAGFYVNRILAPYINEAIRMLTEGERVEHIDAVLVKFGFPVGPIQLLDEVGIDTGTKIIPVLEAAYGERFSAPANVVSSILNDDRKGRKNGRGFYLYGQKGRKSKKQVDPAIYPLIGAQGQGRLSAPQVAERCVMLMLNEAVRCVDEQVIRSVRDGDIGAVFGIGFPPFLGGPFRYIDSLGAGEVVAIMQRLATQYGSRFTPCERLVEMGARGESFWKTTATDLQ.

Residues 1 to 190 form an enoyl-CoA hydratase region; it reads MEMTSAFTLN…KLGLVDDVVP (190 aa). The segment at 306-714 is 3-hydroxyacyl-CoA dehydrogenase; it reads APLNSVGILG…FWKTTATDLQ (409 aa).

This sequence in the N-terminal section; belongs to the enoyl-CoA hydratase/isomerase family. It in the central section; belongs to the 3-hydroxyacyl-CoA dehydrogenase family. Heterotetramer of two alpha chains (FadJ) and two beta chains (FadI).

Its subcellular location is the cytoplasm. It carries out the reaction a (3S)-3-hydroxyacyl-CoA = a (2E)-enoyl-CoA + H2O. The catalysed reaction is a 4-saturated-(3S)-3-hydroxyacyl-CoA = a (3E)-enoyl-CoA + H2O. It catalyses the reaction a (3S)-3-hydroxyacyl-CoA + NAD(+) = a 3-oxoacyl-CoA + NADH + H(+). The enzyme catalyses (3S)-3-hydroxybutanoyl-CoA = (3R)-3-hydroxybutanoyl-CoA. It functions in the pathway lipid metabolism; fatty acid beta-oxidation. Functionally, catalyzes the formation of a hydroxyacyl-CoA by addition of water on enoyl-CoA. Also exhibits 3-hydroxyacyl-CoA epimerase and 3-hydroxyacyl-CoA dehydrogenase activities. The chain is Fatty acid oxidation complex subunit alpha from Escherichia coli (strain 55989 / EAEC).